The primary structure comprises 299 residues: Proline iminopeptidase (299 aa).

The AB hydrolase-1 domain occupies Pro29–Pro279. Catalysis depends on Ser105, which acts as the Nucleophile. Residue Asp245 is part of the active site. The Proton donor role is filled by His272.

Belongs to the peptidase S33 family.

The protein resides in the cell envelope. It carries out the reaction Release of N-terminal proline from a peptide.. Its function is as follows. Releases the N-terminal proline from various substrates. This is Proline iminopeptidase from Levilactobacillus brevis (strain ATCC 367 / BCRC 12310 / CIP 105137 / JCM 1170 / LMG 11437 / NCIMB 947 / NCTC 947) (Lactobacillus brevis).